Consider the following 439-residue polypeptide: tRNA-2-methylthio-N(6)-dimethylallyladenosine synthase (439 aa).

The region spanning 1 to 117 (MKFYIRTFGC…IGNLVKRALN (117 aa)) is the MTTase N-terminal domain. 6 residues coordinate [4Fe-4S] cluster: C10, C46, C80, C153, C157, and C160. Residues 139 to 371 (PISKHHAWIT…MELQKRINLE (233 aa)) form the Radical SAM core domain. The TRAM domain occupies 369 to 436 (NLEENEKYLE…PGPLYGEVVN (68 aa)).

It belongs to the methylthiotransferase family. MiaB subfamily. Monomer. The cofactor is [4Fe-4S] cluster.

It is found in the cytoplasm. The catalysed reaction is N(6)-dimethylallyladenosine(37) in tRNA + (sulfur carrier)-SH + AH2 + 2 S-adenosyl-L-methionine = 2-methylsulfanyl-N(6)-dimethylallyladenosine(37) in tRNA + (sulfur carrier)-H + 5'-deoxyadenosine + L-methionine + A + S-adenosyl-L-homocysteine + 2 H(+). Its function is as follows. Catalyzes the methylthiolation of N6-(dimethylallyl)adenosine (i(6)A), leading to the formation of 2-methylthio-N6-(dimethylallyl)adenosine (ms(2)i(6)A) at position 37 in tRNAs that read codons beginning with uridine. This Petrotoga mobilis (strain DSM 10674 / SJ95) protein is tRNA-2-methylthio-N(6)-dimethylallyladenosine synthase.